Consider the following 305-residue polypeptide: MMKNLVVILGPTASGKTRLAVRLARDLKSEIVSADSRQVYRGMDIGTGKDLDEYRIDGEEIPCHLIDIVDPDYDFNVFEYQSRFYRCFEEILSRGIVPILVGGTGLYLSAVLENYRMVQVPENLDLRESLKAEPLERLQQILLEITPRIHNTTDLLDRGRLLRAIEIAQHSGRRGLRESPEHPRIEPLVFGVRWNRDLLRKRIALRLKERLSAGLIDEVKELHQSGISWDRLEFFGLEYRYVGLYLQSRMSYREMAEKLTIHICRFAKRQETWFRRMERHGIEIIWIEGDDYEALKEQLKGNLRS.

10–17 is a binding site for ATP; it reads GPTASGKT. Position 12–17 (12–17) interacts with substrate; sequence TASGKT. The interval 35 to 38 is interaction with substrate tRNA; sequence DSRQ.

This sequence belongs to the IPP transferase family. In terms of assembly, monomer. Mg(2+) is required as a cofactor.

It catalyses the reaction adenosine(37) in tRNA + dimethylallyl diphosphate = N(6)-dimethylallyladenosine(37) in tRNA + diphosphate. Catalyzes the transfer of a dimethylallyl group onto the adenine at position 37 in tRNAs that read codons beginning with uridine, leading to the formation of N6-(dimethylallyl)adenosine (i(6)A). The polypeptide is tRNA dimethylallyltransferase 1 (Syntrophus aciditrophicus (strain SB)).